Consider the following 115-residue polypeptide: Large ribosomal subunit protein uL24 (115 aa).

This sequence belongs to the universal ribosomal protein uL24 family. In terms of assembly, part of the 50S ribosomal subunit.

Functionally, one of two assembly initiator proteins, it binds directly to the 5'-end of the 23S rRNA, where it nucleates assembly of the 50S subunit. Its function is as follows. One of the proteins that surrounds the polypeptide exit tunnel on the outside of the subunit. This is Large ribosomal subunit protein uL24 from Aster yellows witches'-broom phytoplasma (strain AYWB).